The primary structure comprises 225 residues: Urease accessory protein UreE (225 aa).

2 stretches are compositionally biased toward basic and acidic residues: residues histidine 189–glycine 202 and asparagine 212–arginine 225. Residues histidine 189–arginine 225 are disordered.

Belongs to the UreE family.

Its subcellular location is the cytoplasm. Functionally, involved in urease metallocenter assembly. Binds nickel. Probably functions as a nickel donor during metallocenter assembly. This is Urease accessory protein UreE from Edwardsiella ictaluri.